Consider the following 49-residue polypeptide: Large ribosomal subunit protein bL33B (49 aa).

This sequence belongs to the bacterial ribosomal protein bL33 family.

This is Large ribosomal subunit protein bL33B from Limosilactobacillus reuteri subsp. reuteri (strain JCM 1112) (Lactobacillus reuteri).